The chain runs to 233 residues: MPKRGKKYLEALKLVDRFKAYPVAEAIELVKKTNVAKFDATVEVAFRLGVDPKKADQQIRGAVVLPHGTGKVARVLVFAKGEKAKEAEAAGADYVGDTEYINKIQQGWFDFDVVVATPDMMGEVGKLGRILGPKGLMPNPKTGTVTFDVTKAVQEIKAGKVEYRVDKAGNIHVPIGKVSFDNEKLAENFATIYEAILKAKPAAAKGTYVKNVTITSTMGPGIKVDPTTVAVAQ.

It belongs to the universal ribosomal protein uL1 family. As to quaternary structure, part of the 50S ribosomal subunit.

In terms of biological role, binds directly to 23S rRNA. The L1 stalk is quite mobile in the ribosome, and is involved in E site tRNA release. Its function is as follows. Protein L1 is also a translational repressor protein, it controls the translation of the L11 operon by binding to its mRNA. This chain is Large ribosomal subunit protein uL1, found in Geobacillus thermodenitrificans (strain NG80-2).